The following is a 509-amino-acid chain: MSTAKKPLVLVIMDGWGYSTKQEHNAVAAAKTPNLDRLARDYTSTLISGSGLDVGLPDGQMGNSEVGHVNIGAGRIVYQELTRISKEIKDGDFFQNVELAKALDSAVTKGKAVHIMGLMSPGGVHSHEEHIMGMIEMAAKRGAEQIYFHAFLDGRDVPPRSAQSSIEQFDALFARLGKGRFASMIGRYFAMDRDNRWDRVQQAYDLMTQGKGEFTADSASEALAAAYARDENDEFVKATRIGAAAPMQDGDALIFMNFRADRAREITRAFVDSDFTGFARAATPALNFVMLTEYAADIKTACAYPPTALVNTLGEWLAKQGKTQLRISETEKYAHVTFFFNGGEESCFTGEDREIVASPKVATYDLQPEMSSEELTDKLVAAIKSGKYDTIICNYPNGDMVGHTGVFDAAVKACEAVDHCVGRVTEALAEVGGECLITADHGNAEKMLDEETGQAHTAHTNLPVPLIYFGRKAEVLEGGKLSDLAPTMLTLMGLPVPPEMTGKPLMILK.

Residues D14 and S64 each contribute to the Mn(2+) site. The active-site Phosphoserine intermediate is the S64. Residues H125, 155–156 (RD), R187, R193, 259–262 (RADR), and K332 each bind substrate. Mn(2+)-binding residues include D399, H403, D440, H441, and H459.

It belongs to the BPG-independent phosphoglycerate mutase family. Monomer. Mn(2+) serves as cofactor.

It carries out the reaction (2R)-2-phosphoglycerate = (2R)-3-phosphoglycerate. It functions in the pathway carbohydrate degradation; glycolysis; pyruvate from D-glyceraldehyde 3-phosphate: step 3/5. In terms of biological role, catalyzes the interconversion of 2-phosphoglycerate and 3-phosphoglycerate. The chain is 2,3-bisphosphoglycerate-independent phosphoglycerate mutase from Aeromonas salmonicida (strain A449).